Consider the following 284-residue polypeptide: Bifunctional protein FolD (284 aa).

Residues 165–167 and Ser-190 each bind NADP(+); that span reads GRS.

The protein belongs to the tetrahydrofolate dehydrogenase/cyclohydrolase family. As to quaternary structure, homodimer.

It catalyses the reaction (6R)-5,10-methylene-5,6,7,8-tetrahydrofolate + NADP(+) = (6R)-5,10-methenyltetrahydrofolate + NADPH. It carries out the reaction (6R)-5,10-methenyltetrahydrofolate + H2O = (6R)-10-formyltetrahydrofolate + H(+). The protein operates within one-carbon metabolism; tetrahydrofolate interconversion. In terms of biological role, catalyzes the oxidation of 5,10-methylenetetrahydrofolate to 5,10-methenyltetrahydrofolate and then the hydrolysis of 5,10-methenyltetrahydrofolate to 10-formyltetrahydrofolate. The polypeptide is Bifunctional protein FolD (Streptococcus gordonii (strain Challis / ATCC 35105 / BCRC 15272 / CH1 / DL1 / V288)).